A 479-amino-acid chain; its full sequence is Beta-monoglucosyldiacylglycerol synthase (479 aa).

4 helical membrane passes run 48 to 68 (AAVM…WVWG), 363 to 383 (FLLM…MALW), 389 to 409 (LLTP…YYGL), and 428 to 448 (LART…MPAV).

It belongs to the glycosyltransferase 2 family. Mg(2+) is required as a cofactor.

Its subcellular location is the membrane. The enzyme catalyses a 1,2-diacyl-sn-glycerol + UDP-alpha-D-glucose = a 1,2-diacyl-3-O-(beta-D-glucopyranosyl)-sn-glycerol + UDP + H(+). Glucosyltransferase involved in the biosynthesis of the non-bilayer-forming membrane lipid beta-monoglucosyldiacylglycerol which contributes to regulate the properties and stability of the membrane. Catalyzes the transfer of a glucosyl residue from UDP-Glc to diacylglycerol (DAG) acceptor to form the corresponding beta-glucosyl-DAG (1,2-diacyl-3-O-(beta-D-glucopyranosyl)-sn-glycerol). It can only use UDP-Glc as sugar donor. Two types of DAG (dipalmitoyl-DAG (DPDAG) and 1-oleoyl-2-palmitoyl-DAG (OPDAG)) can be used as sugar acceptors, but OPDAG is preferred. The protein is Beta-monoglucosyldiacylglycerol synthase of Synechocystis sp. (strain ATCC 27184 / PCC 6803 / Kazusa).